We begin with the raw amino-acid sequence, 133 residues long: Small ribosomal subunit protein uS11 (133 aa).

Positions 1-23 (MPPKTRGAVRKPRKKDKKNIALG) are disordered. Basic residues predominate over residues 7-17 (GAVRKPRKKDK).

It belongs to the universal ribosomal protein uS11 family. As to quaternary structure, part of the 30S ribosomal subunit. Interacts with proteins S7 and S18. Binds to IF-3.

In terms of biological role, located on the platform of the 30S subunit, it bridges several disparate RNA helices of the 16S rRNA. Forms part of the Shine-Dalgarno cleft in the 70S ribosome. This is Small ribosomal subunit protein uS11 from Pseudarthrobacter chlorophenolicus (strain ATCC 700700 / DSM 12829 / CIP 107037 / JCM 12360 / KCTC 9906 / NCIMB 13794 / A6) (Arthrobacter chlorophenolicus).